The sequence spans 218 residues: Tegument protein UL51 homolog (218 aa).

Residue Cys-11 is the site of S-palmitoyl cysteine; by host attachment. The segment at 199–218 (APPPVVRQPEHSGPTELALT) is disordered.

It belongs to the herpesviridae UL51 family. As to quaternary structure, homodimer. Interacts with BBRF2; the BBRF2-BSRF1 complexes oligomerize which might play a role in tethering the viral nucleocapsids to the host Golgi membrane during secondary envelopment. Interacts with BGLF3.5. Interacts with BALF1. Interacts with glycoprotein gB. Interacts with glycoprotein heterodimer gH/gL. Post-translationally, phosphorylated. Palmitoylation is necessary for Golgi localization.

The protein resides in the host cytoplasm. The protein localises to the virion. It is found in the host Golgi apparatus. In terms of biological role, plays several roles during the time course of infection, including egress of virus particles from the perinuclear space and secondary envelopment of cytoplasmic capsids that bud into specific trans-Golgi network (TGN)-derived membranes. The chain is Tegument protein UL51 homolog from Homo sapiens (Human).